A 770-amino-acid chain; its full sequence is Elongation factor G, mitochondrial (770 aa).

The N-terminal 24 residues, 1-24, are a transit peptide targeting the mitochondrion; the sequence is MLKLSFRSLTSRLPRLSTLVVRGY. Positions 57-353 constitute a tr-type G domain; it reads KQIRNIGISA…AVCDYLPNPS (297 aa). GTP is bound by residues 66–73, 151–155, and 205–208; these read AHIDSGKT, DTPGH, and NKMD.

It belongs to the TRAFAC class translation factor GTPase superfamily. Classic translation factor GTPase family. EF-G/EF-2 subfamily.

The protein localises to the mitochondrion. It functions in the pathway protein biosynthesis; polypeptide chain elongation. In terms of biological role, mitochondrial GTPase that catalyzes the GTP-dependent ribosomal translocation step during translation elongation. During this step, the ribosome changes from the pre-translocational (PRE) to the post-translocational (POST) state as the newly formed A-site-bound peptidyl-tRNA and P-site-bound deacylated tRNA move to the P and E sites, respectively. Catalyzes the coordinated movement of the two tRNA molecules, the mRNA and conformational changes in the ribosome. The polypeptide is Elongation factor G, mitochondrial (mef1) (Schizosaccharomyces pombe (strain 972 / ATCC 24843) (Fission yeast)).